Here is a 393-residue protein sequence, read N- to C-terminus: Telomeric repeat-binding factor 2-interacting protein 1 (393 aa).

A2 carries the post-translational modification N-acetylalanine. Residues S36 and S43 each carry the phosphoserine modification. The BRCT domain occupies 78-101 (FISTQYILDCVDRNEKLDLEAYRL). The segment at 104-132 (TEQASDPKPGASTEGSTEPEPQPLTGRIA) is disordered. K111 is covalently cross-linked (Glycyl lysine isopeptide (Lys-Gly) (interchain with G-Cter in SUMO2)). Residues 125–185 (QPLTGRIAYT…SLKDRYLKHL (61 aa)) enclose the Myb-like domain. Phosphoserine occurs at positions 151 and 153. K191 participates in a covalent cross-link: Glycyl lysine isopeptide (Lys-Gly) (interchain with G-Cter in SUMO2). The segment at 193-304 (LLGNAPVSPS…EEEPKVSTQE (112 aa)) is disordered. 2 positions are modified to phosphoserine: S200 and S203. Residues K205, K209, and K237 each participate in a glycyl lysine isopeptide (Lys-Gly) (interchain with G-Cter in SUMO2) cross-link. Basic and acidic residues predominate over residues 223 to 252 (QNKRAPDLPEEECVKGEIKENGEADNKLFE). Acidic residues predominate over residues 282-297 (TPEEDSETQPDEEEEE). K366 is covalently cross-linked (Glycyl lysine isopeptide (Lys-Gly) (interchain with G-Cter in SUMO2)). Positions 377-393 (KKFGAQNVARRIEFRKK) match the Nuclear localization signal motif.

The protein belongs to the RAP1 family. Homodimer. Component of the shelterin complex (telosome) composed of TERF1, TERF2, TINF2, TERF2IP ACD and POT1. Binds to TERF2 (but not TERF1) with its C-terminus. Interacts with SLX4/BTBD12. Interacts with TERF2; the interaction is direct. Does not interact with TERF1. Associates with the I-kappa-B-kinase (IKK) core complex, composed of CHUK, IKBKB and IKBKG.

It is found in the nucleus. It localises to the cytoplasm. Its subcellular location is the chromosome. The protein localises to the telomere. Its function is as follows. Acts both as a regulator of telomere function and as a transcription regulator. Involved in the regulation of telomere length and protection as a component of the shelterin complex (telosome). In contrast to other components of the shelterin complex, it is dispensible for telomere capping and does not participate in the protection of telomeres against non-homologous end-joining (NHEJ)-mediated repair. Instead, it is required to negatively regulate telomere recombination and is essential for repressing homology-directed repair (HDR), which can affect telomere length. Does not bind DNA directly: recruited to telomeric double-stranded 5'-TTAGGG-3' repeats via its interaction with TERF2. Independently of its function in telomeres, also acts as a transcription regulator: recruited to extratelomeric 5'-TTAGGG-3' sites via its association with TERF2 or other factors, and regulates gene expression. When cytoplasmic, associates with the I-kappa-B-kinase (IKK) complex and acts as a regulator of the NF-kappa-B signaling by promoting IKK-mediated phosphorylation of RELA/p65, leading to activate expression of NF-kappa-B target genes. This Mus musculus (Mouse) protein is Telomeric repeat-binding factor 2-interacting protein 1 (Terf2ip).